Consider the following 428-residue polypeptide: Phosphoribosylamine--glycine ligase (428 aa).

Residues 109–316 (KDFLHRHGIP…LVELCLAALD (208 aa)) enclose the ATP-grasp domain. 135–196 (LRQVGAPVVV…EEFLTGEEAS (62 aa)) serves as a coordination point for ATP. The interval 211 to 235 (SSQDHKARDDGDRGPNTGGMGAYSP) is disordered. Over residues 213–223 (QDHKARDDGDR) the composition is skewed to basic and acidic residues. Glu-286 and Asn-288 together coordinate Mg(2+).

It belongs to the GARS family. Mg(2+) is required as a cofactor. The cofactor is Mn(2+).

The enzyme catalyses 5-phospho-beta-D-ribosylamine + glycine + ATP = N(1)-(5-phospho-beta-D-ribosyl)glycinamide + ADP + phosphate + H(+). It functions in the pathway purine metabolism; IMP biosynthesis via de novo pathway; N(1)-(5-phospho-D-ribosyl)glycinamide from 5-phospho-alpha-D-ribose 1-diphosphate: step 2/2. The protein is Phosphoribosylamine--glycine ligase (purD) of Allochromatium vinosum (strain ATCC 17899 / DSM 180 / NBRC 103801 / NCIMB 10441 / D) (Chromatium vinosum).